The following is a 144-amino-acid chain: Transcriptional regulator MraZ (144 aa).

SpoVT-AbrB domains follow at residues 6–48 (TYTP…PTDV) and 77–120 (ADEG…DPVR).

It belongs to the MraZ family. In terms of assembly, forms oligomers.

It is found in the cytoplasm. It localises to the nucleoid. The chain is Transcriptional regulator MraZ from Nocardioides sp. (strain ATCC BAA-499 / JS614).